Consider the following 231-residue polypeptide: MAPVSIVSRAAMRAAAAPARAVRALTTSTALQGSSSSTFESPFKGESKAAKVPDFGKYMSKAPPSTNMLFSYFMVGTMGAITAAGAKSTIQEFLKNMSASADVLAMAKVEVDLNAIPEGKNVIIKWRGKPVFIRHRTPAEIEEANKVNVATLRDPETDADRVKKPEWLVMLGVCTHLGCVPIGEAGDYGGWFCPCHGSHYDISGRIRKGPAPLNLEIPLYEFPEEGKLVIG.

Residues Met-1–Ala-24 constitute a mitochondrion transit peptide. The propeptide at Leu-25–Gln-32 is removed in mature form. Over Gly-33–Ser-65 the chain is Mitochondrial matrix. A helical membrane pass occupies residues Thr-66–Lys-95. Over Asn-96–Gly-231 the chain is Mitochondrial intermembrane. One can recognise a Rieske domain in the interval Arg-134 to Val-229. [2Fe-2S] cluster is bound by residues Cys-174, His-176, Cys-193, and His-196. Cys-179 and Cys-195 are joined by a disulfide.

This sequence belongs to the Rieske iron-sulfur protein family. In terms of assembly, component of the ubiquinol-cytochrome c oxidoreductase (cytochrome b-c1 complex, complex III, CIII), a multisubunit enzyme composed of 10 subunits. The complex is composed of 3 respiratory subunits cytochrome b (cob), cytochrome c1 (cyt-1) and Rieske protein (fes-1), 2 core protein subunits pep and ucr-1, and 5 low-molecular weight protein subunits qcr6, qcr7, qcr8, qcr9 and probably NCU16844/qcr10. The complex exists as an obligatory dimer and forms supercomplexes (SCs) in the inner mitochondrial membrane with NADH-ubiquinone oxidoreductase (complex I, CI) and cytochrome c oxidase (complex IV, CIV), resulting in different assemblies (supercomplexes SCI(1)III(2), SCIII(2)IV(1) and SCIII(2)IV(2) as well as higher order I(x)III(y)IV(z) megacomplexes). [2Fe-2S] cluster serves as cofactor. Processed by both the mitochondrial processing peptidase (MPP) and the mitochondrial intermediate protease (MIP). Initially, MPP removes 25 amino acids from the newly imported precursor in the mitochondrial matrix. This proteolytic processing is then followed by a second proteolytic cleavage by MIP, which removes an octapeptide to generate mature-sized Rieske protein.

It localises to the mitochondrion inner membrane. It catalyses the reaction a quinol + 2 Fe(III)-[cytochrome c](out) = a quinone + 2 Fe(II)-[cytochrome c](out) + 2 H(+)(out). Functionally, component of the ubiquinol-cytochrome c oxidoreductase, a multisubunit transmembrane complex that is part of the mitochondrial electron transport chain which drives oxidative phosphorylation. The respiratory chain contains 3 multisubunit complexes succinate dehydrogenase (complex II, CII), ubiquinol-cytochrome c oxidoreductase (cytochrome b-c1 complex, complex III, CIII) and cytochrome c oxidase (complex IV, CIV), that cooperate to transfer electrons derived from NADH and succinate to molecular oxygen, creating an electrochemical gradient over the inner membrane that drives transmembrane transport and the ATP synthase. The cytochrome b-c1 complex catalyzes electron transfer from ubiquinol to cytochrome c, linking this redox reaction to translocation of protons across the mitochondrial inner membrane, with protons being carried across the membrane as hydrogens on the quinol. In the process called Q cycle, 2 protons are consumed from the matrix, 4 protons are released into the intermembrane space and 2 electrons are passed to cytochrome c. The Rieske protein is a catalytic core subunit containing a [2Fe-2S] iron-sulfur cluster. It cycles between 2 conformational states during catalysis to transfer electrons from the quinol bound in the Q(0) site in cytochrome b to cytochrome c1. The chain is Cytochrome b-c1 complex subunit Rieske, mitochondrial (fes-1) from Neurospora crassa (strain ATCC 24698 / 74-OR23-1A / CBS 708.71 / DSM 1257 / FGSC 987).